Consider the following 311-residue polypeptide: Small ribosomal subunit protein uS3 (311 aa).

Positions 17 to 86 (MDEYFAEQLN…NPQIDAQEVK (70 aa)) constitute a KH type-2 domain. Residues 190–267 (PDSYTTTEPS…EPQAEVAEDL (78 aa)) are disordered. Low complexity predominate over residues 194–204 (TTTEPSEPVTE). The span at 205–231 (PVEKPAEKPAAKPAEKPVEAPKKESAA) shows a compositional bias: basic and acidic residues. Low complexity predominate over residues 232–247 (KPKTPAVAPEKPVETA). The span at 248-267 (EVAEPEEAEEEPQAEVAEDL) shows a compositional bias: acidic residues.

This sequence belongs to the universal ribosomal protein uS3 family. Part of the 30S ribosomal subunit.

Its function is as follows. Binds the lower part of the 30S subunit head. The polypeptide is Small ribosomal subunit protein uS3 (Methanosarcina barkeri (strain Fusaro / DSM 804)).